The primary structure comprises 249 residues: tRNA pseudouridine synthase A (249 aa).

The Nucleophile role is filled by aspartate 52. Residue tyrosine 110 coordinates substrate.

This sequence belongs to the tRNA pseudouridine synthase TruA family. As to quaternary structure, homodimer.

It catalyses the reaction uridine(38/39/40) in tRNA = pseudouridine(38/39/40) in tRNA. In terms of biological role, formation of pseudouridine at positions 38, 39 and 40 in the anticodon stem and loop of transfer RNAs. The chain is tRNA pseudouridine synthase A from Syntrophomonas wolfei subsp. wolfei (strain DSM 2245B / Goettingen).